A 357-amino-acid polypeptide reads, in one-letter code: MTLWVVKLGTSLLRGDTAATIAGFAAGIAAAFARGDRVVLVSSGAVGLGCQRLQLPQRPETVVALQAAAATGQGQLMALYERALANHGIAVAQILVTRSDLADRRRYQNASGTLQQLLQWGVLPVVNENDAISPAELRFGDNDTLSALVAAAVGADQLILLTDVDRLYSADPRLVVDARPISDVHHPRELDALEAVAGDGGRWGRGGMTTKLAAARIATASGITVHLADGRDPRRLDALLQGERGGTVFHPHPEPLGNRRSWLAHALQPQGELTLDAGACDALHQRGSSLLMVGITAVKGVFGANQPVRLQGPDGRELGRGLCQLSSAAVQRALDAAPAAGPSPVVVHRDALVLHSR.

Residue K7 participates in ATP binding. S43, D130, and N142 together coordinate substrate. 162-163 (TD) is a binding site for ATP. Residues 270 to 347 (QGELTLDAGA…PAAGPSPVVV (78 aa)) form the PUA domain.

The protein belongs to the glutamate 5-kinase family.

The protein localises to the cytoplasm. The catalysed reaction is L-glutamate + ATP = L-glutamyl 5-phosphate + ADP. Its pathway is amino-acid biosynthesis; L-proline biosynthesis; L-glutamate 5-semialdehyde from L-glutamate: step 1/2. Functionally, catalyzes the transfer of a phosphate group to glutamate to form L-glutamate 5-phosphate. In Parasynechococcus marenigrum (strain WH8102), this protein is Glutamate 5-kinase.